Consider the following 194-residue polypeptide: GTP cyclohydrolase 1 (194 aa).

Residues cysteine 83, histidine 86, and cysteine 155 each contribute to the Zn(2+) site.

It belongs to the GTP cyclohydrolase I family. Homomer.

It catalyses the reaction GTP + H2O = 7,8-dihydroneopterin 3'-triphosphate + formate + H(+). It functions in the pathway cofactor biosynthesis; 7,8-dihydroneopterin triphosphate biosynthesis; 7,8-dihydroneopterin triphosphate from GTP: step 1/1. The polypeptide is GTP cyclohydrolase 1 (Streptococcus pyogenes serotype M49 (strain NZ131)).